A 170-amino-acid polypeptide reads, in one-letter code: Pollen-specific protein C13 (170 aa).

The N-terminal stretch at 1-27 (MASVPAPATTTAAVILCLCVVLSCAAA) is a signal peptide. Disulfide bonds link C43–C114, C46–C155, and C67–C102. N-linked (GlcNAc...) asparagine glycosylation occurs at N53.

It belongs to the Ole e I family. As to expression, pollen.

The polypeptide is Pollen-specific protein C13 (MGS1) (Zea mays (Maize)).